Consider the following 332-residue polypeptide: Putative integrase/recombinase y4rC (332 aa).

Residues 5 to 98 (ASLAPLLESF…AIHSFFRYAA (94 aa)) form the Core-binding (CB) domain. Residues 122 to 307 (TLVNFLTRPE…TLAMKEAALA (186 aa)) enclose the Tyr recombinase domain. Active-site residues include arginine 162, lysine 187, histidine 259, arginine 262, and histidine 285. Tyrosine 294 acts as the O-(3'-phospho-DNA)-tyrosine intermediate in catalysis.

The protein belongs to the 'phage' integrase family.

This is Putative integrase/recombinase y4rC from Sinorhizobium fredii (strain NBRC 101917 / NGR234).